Here is a 97-residue protein sequence, read N- to C-terminus: Glutamyl-tRNA(Gln) amidotransferase subunit C (97 aa).

The protein belongs to the GatC family. Heterotrimer of A, B and C subunits.

The catalysed reaction is L-glutamyl-tRNA(Gln) + L-glutamine + ATP + H2O = L-glutaminyl-tRNA(Gln) + L-glutamate + ADP + phosphate + H(+). It carries out the reaction L-aspartyl-tRNA(Asn) + L-glutamine + ATP + H2O = L-asparaginyl-tRNA(Asn) + L-glutamate + ADP + phosphate + 2 H(+). Its function is as follows. Allows the formation of correctly charged Asn-tRNA(Asn) or Gln-tRNA(Gln) through the transamidation of misacylated Asp-tRNA(Asn) or Glu-tRNA(Gln) in organisms which lack either or both of asparaginyl-tRNA or glutaminyl-tRNA synthetases. The reaction takes place in the presence of glutamine and ATP through an activated phospho-Asp-tRNA(Asn) or phospho-Glu-tRNA(Gln). The polypeptide is Glutamyl-tRNA(Gln) amidotransferase subunit C (Sulfurisphaera tokodaii (strain DSM 16993 / JCM 10545 / NBRC 100140 / 7) (Sulfolobus tokodaii)).